The chain runs to 707 residues: Ribosome biogenesis protein ENP2 (707 aa).

WD repeat units lie at residues 54–94, 178–217, 226–265, 269–310, and 312–351; these read EFSE…LKFD, LDTEGVNHVSINEVNGLLAAGTETNVVEFWDPRSRSRVSK, NRPFQVTTTSFRNDGLTFACGTSNGYSYIYDLRTSEPSII, GYGF…AYAS, and EPSVDINDIEHVPGTGMFFTANESIPMHTYYIPSLGPSPR. Residues 523–707 form a disordered region; that stretch reads LTAAEESDEE…RASKNAFRGM (185 aa). S529 carries the phosphoserine modification. The span at 532–544 shows a compositional bias: basic and acidic residues; the sequence is ERIAMKDGRGHYD. Over residues 545 to 558 the composition is skewed to acidic residues; it reads YEDEESDEEESDDE. Residues S550 and S555 each carry the phosphoserine modification. Basic and acidic residues-rich tracts occupy residues 559 to 598, 629 to 647, 659 to 671, and 680 to 697; these read TNQKSNKEELSEKDLRKMEKQKALIERRKKEKEQSERFMN, ENGKKSNESILRRNQRGEA, KDGNYKSRRHDNS, and NGNKKDNGRSKPRFENRR.

It belongs to the WD repeat NOL10/ENP2 family. Component of the 90S pre-ribosomes.

It is found in the nucleus. It localises to the nucleolus. Functionally, may be involved in rRNA-processing and ribosome biosynthesis. The polypeptide is Ribosome biogenesis protein ENP2 (ENP2) (Saccharomyces cerevisiae (strain ATCC 204508 / S288c) (Baker's yeast)).